The sequence spans 343 residues: General transcription and DNA repair factor IIH subunit TFB6 (343 aa).

At tyrosine 69 the chain carries Phosphotyrosine. A phosphothreonine mark is found at threonine 71 and threonine 84. Serine 104, serine 105, serine 108, and serine 342 each carry phosphoserine.

As to quaternary structure, component of the general transcription factor TFIIH, composed of a 7-subunit TFIIH core complex composed of XPB/SSL2, XPD/RAD3, SSL1, TFB1, TFB2, TFB4 and TFB5 which is active in NER; the 3-subunit CTD-kinase module TFIIK composed of CCL1, KIN28, and TFB3 which is active in transcription; as well as TFB6 that regulates SSL2 association with the complex. Post-translationally, phosphorylation leads the dissociation of from SSL2.

It localises to the cytoplasm. Its subcellular location is the nucleus. Component of the general transcription and DNA repair factor IIH (TFIIH) core complex, which is involved in general and transcription-coupled nucleotide excision repair (NER) of damaged DNA and, when complexed to TFIIK, in RNA transcription by RNA polymerase II. In NER, TFIIH acts by opening DNA around the lesion to allow the excision of the damaged oligonucleotide and its replacement by a new DNA fragment. In transcription, TFIIH has an essential role in transcription initiation. When the pre-initiation complex (PIC) has been established, TFIIH is required for promoter opening and promoter escape. Phosphorylation of the C-terminal tail (CTD) of the largest subunit of RNA polymerase II by the kinase module TFIIK controls the initiation of transcription. TFB6 facilitates dissociation of the SSL2 helicase from TFIIH after transcription initiation. In Saccharomyces cerevisiae (strain ATCC 204508 / S288c) (Baker's yeast), this protein is General transcription and DNA repair factor IIH subunit TFB6.